The sequence spans 137 residues: Fluoride-specific ion channel FluC 2 (137 aa).

The next 4 helical transmembrane spans lie at M3–G23, W44–A64, P76–L96, and L111–L131. 2 residues coordinate Na(+): G86 and T89.

The protein belongs to the fluoride channel Fluc/FEX (TC 1.A.43) family.

It is found in the cell inner membrane. The catalysed reaction is fluoride(in) = fluoride(out). With respect to regulation, na(+) is not transported, but it plays an essential structural role and its presence is essential for fluoride channel function. Fluoride-specific ion channel. Important for reducing fluoride concentration in the cell, thus reducing its toxicity. This chain is Fluoride-specific ion channel FluC 2, found in Bradyrhizobium diazoefficiens (strain JCM 10833 / BCRC 13528 / IAM 13628 / NBRC 14792 / USDA 110).